Reading from the N-terminus, the 122-residue chain is MVKLTSIAAGVAAIAAGASAAATTTLSQSDERVNLVELGVYVSDIRAHLAEYYSFQAAHPTETYPVEIAEAVFNYGDFTTMLTGIPADQVTRVITGVPWYSSRLKPAISSALSADGIYTIAN.

A helical membrane pass occupies residues 7 to 24 (IAAGVAAIAAGASAAATT).

This sequence belongs to the SRP1/TIP1 family. Seripauperin subfamily.

It localises to the membrane. This chain is Seripauperin-5 (PAU5), found in Saccharomyces cerevisiae (strain ATCC 204508 / S288c) (Baker's yeast).